Reading from the N-terminus, the 264-residue chain is Orotidine 5'-phosphate decarboxylase (264 aa).

Substrate is bound by residues aspartate 40, 62 to 64 (KTH), 93 to 102 (DRKFADIGNT), tyrosine 214, and arginine 233. The Proton donor role is filled by lysine 95.

This sequence belongs to the OMP decarboxylase family.

The enzyme catalyses orotidine 5'-phosphate + H(+) = UMP + CO2. It participates in pyrimidine metabolism; UMP biosynthesis via de novo pathway; UMP from orotate: step 2/2. The polypeptide is Orotidine 5'-phosphate decarboxylase (ura4) (Schizosaccharomyces pombe (strain 972 / ATCC 24843) (Fission yeast)).